The sequence spans 149 residues: Transcription factor Atoh7 (149 aa).

One can recognise a bHLH domain in the interval 41–93; sequence RRRLAANARERRRMQGLNTAFDRLRRVVPQWGQDKKLSKYETLQMALSYIIAL.

Forms a heterodimer with TCF3 isoform E47; interaction may be required for DNA-binding in certain situations. As to expression, expressed in retinal ganglion cells. Expressed in the cerebellum, trapezoid body, ventral nucleus of the lateral lamniscus and in areas of the auditory hindbrain such as the cochlear nucleus, lateral superior olive and medial nucleus of the trapezoid body. Expressed in the modiolar nerve root and in the cochlear in a small group of bushy neurons within the acoustic nerve. Expressed weakly in the sensory epithelia of the saccule and utricle.

The protein localises to the nucleus. Its subcellular location is the perikaryon. The protein resides in the cell projection. It is found in the axon. Functionally, transcription factor that binds to DNA at the consensus sequence 5'-CAG[GC]TG-3'. Dimerization with TCF3 isoform E47 may be required in certain situations. Binds to gene promoters and enhancer elements, and thereby regulates a transcriptional program of retinal ganglion cell (RGC) determinant genes. Although the exact mechanism is not certain, retinal transcription regulation by ATOH7 has a role in RGC determination and survival, photoreceptor population development, targeting of RGC axons to the optic nerve and development of the retino-hypothalamic tract. Binds to its own promoter and enhancer sequences, suggesting autoregulation of ATOH7 transcription. Required for retinal circadian rhythm photoentrainment. Plays a role in brainstem auditory signaling and binaural processing. In Mus musculus (Mouse), this protein is Transcription factor Atoh7.